A 347-amino-acid polypeptide reads, in one-letter code: Anthranilate phosphoribosyltransferase (347 aa).

5-phospho-alpha-D-ribose 1-diphosphate-binding positions include G88, 91-92, T96, 98-101, 116-124, and S128; these read GD, NIST, and KHGNRSVSS. G88 is an anthranilate binding site. Mg(2+) is bound at residue S100. N119 is an anthranilate binding site. Position 174 (R174) interacts with anthranilate. Residues D232 and E233 each contribute to the Mg(2+) site.

This sequence belongs to the anthranilate phosphoribosyltransferase family. Homodimer. Mg(2+) is required as a cofactor.

The enzyme catalyses N-(5-phospho-beta-D-ribosyl)anthranilate + diphosphate = 5-phospho-alpha-D-ribose 1-diphosphate + anthranilate. It participates in amino-acid biosynthesis; L-tryptophan biosynthesis; L-tryptophan from chorismate: step 2/5. Its function is as follows. Catalyzes the transfer of the phosphoribosyl group of 5-phosphorylribose-1-pyrophosphate (PRPP) to anthranilate to yield N-(5'-phosphoribosyl)-anthranilate (PRA). This chain is Anthranilate phosphoribosyltransferase, found in Shewanella oneidensis (strain ATCC 700550 / JCM 31522 / CIP 106686 / LMG 19005 / NCIMB 14063 / MR-1).